Reading from the N-terminus, the 231-residue chain is Uracil-DNA glycosylase (231 aa).

Residue aspartate 71 is the Proton acceptor of the active site.

This sequence belongs to the uracil-DNA glycosylase (UDG) superfamily. UNG family.

It localises to the cytoplasm. It catalyses the reaction Hydrolyzes single-stranded DNA or mismatched double-stranded DNA and polynucleotides, releasing free uracil.. In terms of biological role, excises uracil residues from the DNA which can arise as a result of misincorporation of dUMP residues by DNA polymerase or due to deamination of cytosine. The sequence is that of Uracil-DNA glycosylase from Pseudomonas aeruginosa (strain ATCC 15692 / DSM 22644 / CIP 104116 / JCM 14847 / LMG 12228 / 1C / PRS 101 / PAO1).